Consider the following 383-residue polypeptide: F-box/kelch-repeat protein At2g29830 (383 aa).

Positions 1–21 (MVVLSEIPGDPNEDNQNENPQ) are disordered. The segment covering 11-21 (PNEDNQNENPQ) has biased composition (acidic residues). The F-box domain maps to 27–73 (LPILLQLPEELIASIVALIPRCHYPSLSLVSRAFRHLITSQELYVAR). Kelch repeat units follow at residues 130–178 (KMYV…IIDG), 179–224 (RIYV…FITY), 226–272 (VMQG…VVGD), 274–317 (LYAL…YTST), and 324–370 (KLVI…RDLP).

This Arabidopsis thaliana (Mouse-ear cress) protein is F-box/kelch-repeat protein At2g29830.